We begin with the raw amino-acid sequence, 204 residues long: Putative AgrB-like protein (204 aa).

The next 5 membrane-spanning stretches (helical) occupy residues Y52–L74, L87–I107, N111–A131, A151–A168, and L173–Y190.

This sequence belongs to the AgrB family.

The protein localises to the cell membrane. Its function is as follows. May be involved in the proteolytic processing of a quorum sensing system signal molecule precursor. The protein is Putative AgrB-like protein of Listeria monocytogenes serovar 1/2a (strain ATCC BAA-679 / EGD-e).